Reading from the N-terminus, the 885-residue chain is Putative membrane protein YdgH (885 aa).

7 helical membrane passes run 9–29, 181–201, 202–222, 227–247, 278–298, 304–324, and 354–374; these read WAIAAIVLALTVVLSLFSPNL, IIGLLLIVFRSVVTPFIPIVV, VGFSYLISQSILGILVYNVDF, FTQTFLVAILFGIGTDYCILL, ISGFAVLIGFSALGFAKFAIF, VAVGVGILMIILYTLLPLFMV, and VARPFLFIVITVVITLPFILT. Positions 498 to 518 are disordered; that stretch reads MAGQTGSASNGGSGGSLGDAA. A run of 5 helical transmembrane segments spans residues 716 to 736, 740 to 760, 772 to 792, 817 to 837, and 847 to 867; these read MVIMIIGLFIVLTILFRSMIM, MIASLLLTYYTSISITELIFV, VPFFSFVILIALGVDYSIFLL, VIITAAIILAGTFAAMMPSGV, and IIIGLLLYGLVILPLFIPAII.

The protein belongs to the resistance-nodulation-cell division (RND) (TC 2.A.6) family. MmpL subfamily.

The protein localises to the cell membrane. This chain is Putative membrane protein YdgH (ydgH), found in Bacillus subtilis (strain 168).